A 198-amino-acid chain; its full sequence is Putative pseudouridine methyltransferase (198 aa).

2 residues coordinate S-adenosyl-L-methionine: methionine 132 and cysteine 186.

This sequence belongs to the methyltransferase superfamily. TrmY family.

The protein resides in the cytoplasm. The polypeptide is Putative pseudouridine methyltransferase (Shewanella baltica (strain OS223)).